Consider the following 1954-residue polypeptide: Protein GREB1 (1954 aa).

Disordered stretches follow at residues 48 to 83 (LSSL…QLPP), 238 to 342 (LAAF…AKHE), and 1083 to 1235 (KGPK…GSSS). Residues 59–68 (NEEEEEDGEG) show a composition bias toward acidic residues. Low complexity predominate over residues 292–303 (SSLSALPRPSAL). 2 stretches are compositionally biased toward basic and acidic residues: residues 1083–1099 (KGPK…KLSS) and 1122–1133 (GPVKRERSHSHD). Positions 1134–1146 (SASSSLSSRASGS) are enriched in low complexity. The segment covering 1187–1196 (RVSQGSTVIS) has biased composition (polar residues). Over residues 1224–1235 (SSQLSSSSGSSS) the composition is skewed to low complexity. The chain crosses the membrane as a helical span at residues 1873-1893 (DMVFSGLLLYLCDSFVGASFL).

The protein belongs to the GREB1 family.

It localises to the membrane. May play a role in estrogen-stimulated cell proliferation. This chain is Protein GREB1 (Greb1), found in Mus musculus (Mouse).